The primary structure comprises 1054 residues: Desmoglein-1 (1054 aa).

Residues 1 to 23 (MNWHFLRTATVLLIFLVVVEINS) form the signal peptide. Positions 24 to 49 (EFRIQVRDYNTKNGTIKWHSIRRQKR) are excised as a propeptide. Asparagine 36, asparagine 110, and asparagine 180 each carry an N-linked (GlcNAc...) asparagine glycan. Cadherin domains lie at 50 to 157 (EWIK…PPVF), 158 to 269 (SMST…IPYM), 270 to 389 (EPSS…RPGS), and 386 to 493 (RPGS…KDSE). The Extracellular portion of the chain corresponds to 50–566 (EWIKFAAACR…NLSDNVHFGP (517 aa)). Residues 487–554 (GWEKDSEKVT…QSNNNHQELG (68 aa)) form a disordered region. The segment covering 496 to 507 (TSSQNSGSSTGD) has biased composition (low complexity). Over residues 508 to 517 (SSGGTGGGGR) the composition is skewed to gly residues. The segment covering 523–534 (GDTTTNTGGKTS) has biased composition (low complexity). A compositionally biased stretch (polar residues) spans 542–554 (TQTQSNNNHQELG). Residue asparagine 557 is glycosylated (N-linked (GlcNAc...) asparagine). The helical transmembrane segment at 567–587 (AGIGLLIMGFLVLGLVPFLLM) threads the bilayer. Residues 588–1054 (CCDCGGAPGA…TKYSTVQYTK (467 aa)) lie on the Cytoplasmic side of the membrane. Desmoglein repeat repeat units follow at residues 830–856 (TYPS…TVTE), 857–886 (SYTT…ERVV), 887–916 (GPIS…ERVI), 917–944 (APSS…ERVI), and 945–973 (RPAS…ERVV). Positions 1018–1040 (GHVRSSSDHHFSQTLGSASPSTA) are disordered. The span at 1029–1040 (SQTLGSASPSTA) shows a compositional bias: polar residues.

As to quaternary structure, binds to JUP/plakoglobin. Interacts with PKP2. Interacts with DSC3; there is evidence to suggest that the interaction promotes cell-cell adhesion of keratinocytes.

The protein resides in the cell membrane. Its subcellular location is the cell junction. It localises to the desmosome. It is found in the cytoplasm. The protein localises to the nucleus. In terms of biological role, component of intercellular desmosome junctions. Involved in the interaction of plaque proteins and intermediate filaments mediating cell-cell adhesion. The sequence is that of Desmoglein-1 (DSG1) from Canis lupus familiaris (Dog).